The following is a 607-amino-acid chain: MGIIRELSDSLANRIAAGEVVERPASVVKELVENALDAGATQVDVELEEAGMKRITIRDNGHGFYPEDAELAFVRHATSKIKDEHDLFRIKTLGFRGEALASIASVSKVTLKTKREEQEGIQLTLDCGRLTDRSAIAMNRGTELTVEQLFFNTPARLKYLKTTHTELAAITDILNRVAFAHPDVKLYAVHEGKVLIQTNGSGDVRQALASVYGHQTIQGTLVATGTTADYQLTCHLVKPEVTRASKNYITLILNGRSVKNFALTQAVLNGYHTLLPIGRFPIAVIEVTMDPLLIDVNVHPAKREVRLSKEAELCQLIQETIRLTLSRQTLIPKVTPQKPKKDPSAQEKLEFSYVAEPVEELSSRSVWNYPIPKRTEAGNEHVPSANRIQPPDPSIDMPDEPVPEQTDEPVATGPKFPHLDVIGQLHSSYIVCSGADGMYLIDQHAAQERIKYETYKVMFGRPLEQKQQLLLPYTFEIASDDMRRMDEVLPLLRDVGIELEAFGPQSFIVREVPTWFPSHRQEETIQELMDEALMKRKVDLETYREDAAIMMACKKSIKANHPLNHEMMRQLIVDLAKTEMPFTCPHGRPVIIEWTTYELEKLFKRVT.

Residues Arg-374–Ala-411 are disordered. A compositionally biased stretch (acidic residues) spans Met-397 to Asp-407.

Belongs to the DNA mismatch repair MutL/HexB family.

This protein is involved in the repair of mismatches in DNA. It is required for dam-dependent methyl-directed DNA mismatch repair. May act as a 'molecular matchmaker', a protein that promotes the formation of a stable complex between two or more DNA-binding proteins in an ATP-dependent manner without itself being part of a final effector complex. The sequence is that of DNA mismatch repair protein MutL from Exiguobacterium sibiricum (strain DSM 17290 / CCUG 55495 / CIP 109462 / JCM 13490 / 255-15).